Here is a 431-residue protein sequence, read N- to C-terminus: Phosphomethylpyrimidine synthase (431 aa).

Residues Asn66, Met95, Tyr124, His163, 185–187 (SRG), 226–229 (DGLR), and Glu265 contribute to the substrate site. Residue His269 participates in Zn(2+) binding. Residue Tyr292 participates in substrate binding. A Zn(2+)-binding site is contributed by His333. [4Fe-4S] cluster is bound by residues Cys408, Cys411, and Cys415.

It belongs to the ThiC family. It depends on [4Fe-4S] cluster as a cofactor.

It carries out the reaction 5-amino-1-(5-phospho-beta-D-ribosyl)imidazole + S-adenosyl-L-methionine = 4-amino-2-methyl-5-(phosphooxymethyl)pyrimidine + CO + 5'-deoxyadenosine + formate + L-methionine + 3 H(+). It functions in the pathway cofactor biosynthesis; thiamine diphosphate biosynthesis. Functionally, catalyzes the synthesis of the hydroxymethylpyrimidine phosphate (HMP-P) moiety of thiamine from aminoimidazole ribotide (AIR) in a radical S-adenosyl-L-methionine (SAM)-dependent reaction. The polypeptide is Phosphomethylpyrimidine synthase (Dehalococcoides mccartyi (strain CBDB1)).